Here is a 116-residue protein sequence, read N- to C-terminus: uncharacterized protein (116 aa).

This is an uncharacterized protein from Acidianus filamentous virus 2 (isolate Italy/Pozzuoli) (AFV-2).